Here is a 291-residue protein sequence, read N- to C-terminus: Ribosomal RNA small subunit methyltransferase A (291 aa).

The S-adenosyl-L-methionine site is built by asparagine 27, leucine 29, glycine 54, glutamate 75, aspartate 100, and asparagine 125.

It belongs to the class I-like SAM-binding methyltransferase superfamily. rRNA adenine N(6)-methyltransferase family. RsmA subfamily.

It localises to the cytoplasm. The catalysed reaction is adenosine(1518)/adenosine(1519) in 16S rRNA + 4 S-adenosyl-L-methionine = N(6)-dimethyladenosine(1518)/N(6)-dimethyladenosine(1519) in 16S rRNA + 4 S-adenosyl-L-homocysteine + 4 H(+). Specifically dimethylates two adjacent adenosines (A1518 and A1519) in the loop of a conserved hairpin near the 3'-end of 16S rRNA in the 30S particle. May play a critical role in biogenesis of 30S subunits. The chain is Ribosomal RNA small subunit methyltransferase A from Streptococcus mutans serotype c (strain ATCC 700610 / UA159).